The primary structure comprises 385 residues: Ribosomal RNA large subunit methyltransferase G (385 aa).

Belongs to the methyltransferase superfamily. RlmG family.

It is found in the cytoplasm. It carries out the reaction guanosine(1835) in 23S rRNA + S-adenosyl-L-methionine = N(2)-methylguanosine(1835) in 23S rRNA + S-adenosyl-L-homocysteine + H(+). Specifically methylates the guanine in position 1835 (m2G1835) of 23S rRNA. This chain is Ribosomal RNA large subunit methyltransferase G, found in Vibrio campbellii (strain ATCC BAA-1116).